The chain runs to 925 residues: Translation initiation factor IF-2 (925 aa).

2 disordered regions span residues Gly52–Pro84 and Ala98–Leu326. The span at Ala57–Ala68 shows a compositional bias: low complexity. Residues Ala69–Pro84 show a composition bias toward basic and acidic residues. Residues Ala98–Ser138 show a composition bias toward low complexity. 2 stretches are compositionally biased toward pro residues: residues Ala139–Lys169 and Pro193–Pro207. Positions Arg236–Gly296 are enriched in gly residues. Basic residues predominate over residues Arg300–Lys309. One can recognise a tr-type G domain in the interval Thr421 to Leu592. Residues Gly430–Thr437 are G1. A GTP-binding site is contributed by Gly430–Thr437. The interval Gly455 to His459 is G2. The tract at residues Asp480–Gly483 is G3. Residues Asp480–His484 and Asn534–Asp537 each bind GTP. The segment at Asn534–Asp537 is G4. The tract at residues Ser570 to Lys572 is G5.

Belongs to the TRAFAC class translation factor GTPase superfamily. Classic translation factor GTPase family. IF-2 subfamily.

The protein localises to the cytoplasm. Functionally, one of the essential components for the initiation of protein synthesis. Protects formylmethionyl-tRNA from spontaneous hydrolysis and promotes its binding to the 30S ribosomal subunits. Also involved in the hydrolysis of GTP during the formation of the 70S ribosomal complex. The sequence is that of Translation initiation factor IF-2 from Mycolicibacterium paratuberculosis (strain ATCC BAA-968 / K-10) (Mycobacterium paratuberculosis).